The sequence spans 99 residues: Bublin coiled-coil protein (99 aa).

A coiled-coil region spans residues 34 to 71; that stretch reads LDQINSCLDDIEERNDALNGKLQELLESNRAARRDFRQ. The segment covering 66–78 has biased composition (basic and acidic residues); sequence RRDFRQQITDHAD. The disordered stretch occupies residues 66–99; it reads RRDFRQQITDHADLPPPANDDDEDEQSRDAQKKD.

It belongs to the UPF0184 (EST00098) family.

It localises to the cell junction. It is found in the cytoplasm. Its subcellular location is the cytoskeleton. Functionally, essential for intermediate filament organization in intestinal cells, interacts with intermediate filament and regulates intestinal lumen morphology. The polypeptide is Bublin coiled-coil protein (bbln) (Danio rerio (Zebrafish)).